Here is a 345-residue protein sequence, read N- to C-terminus: MNSELFSPYTIKDVTLKNRIVMSPMCMYSSENEDGQVTNFHLIHYGTRAAGQVGLVMIEATAVLPEGRISNKDLGIWDDSLIEGLHKTTTFIHDNGAKAAIQLAHAGRKAELETDALAPSAVPFNETMKIPVEMSIHQIKNTILAFQQAAIRSKQAGFDVIEIHGAHGYLINEFLSPLSNKRTDEYGGSPENRYRFLREIIDSINEVWNGPLFVRISANDYHPDGLTVQDYVQYTKWMKEQGVDLIDCSSGAVVPARIDVYPGYQVQYAKHIKEHANIATGAVGLITTGAQAEQILNNNEADLIFIGRELLRNPYFPRIAANELGFELEEPHQYERAPGKISTNK.

23 to 26 (SPMC) is a binding site for FMN. A substrate-binding site is contributed by Tyr-28. The FMN site is built by Ala-60 and Gln-102. Position 164–167 (164–167 (HGAH)) interacts with substrate. Residues Arg-215 and 307–308 (GR) each bind FMN.

This sequence belongs to the NADH:flavin oxidoreductase/NADH oxidase family. NamA subfamily. As to quaternary structure, homotetramer. FMN is required as a cofactor.

The enzyme catalyses A + NADPH + H(+) = AH2 + NADP(+). Catalyzes the reduction of the double bond of an array of alpha,beta-unsaturated aldehydes and ketones. It also reduces the nitro group of nitroester and nitroaromatic compounds. It could have a role in detoxification processes. This is NADPH dehydrogenase from Bacillus anthracis (strain CDC 684 / NRRL 3495).